Consider the following 209-residue polypeptide: MNPSMKQKQEEIKENIKNSSVPRRTLKMIQPSASGSLVGRENELSAGLSKRKHRNDHLTSTTSSPGVIVPESSENKNLGGVTQESFDLMIKENPSSQYWKEVAEKRRKALYEALKENEKLHKEIEQKDNEIARLKKENKELAEVAEHVQYMAELIERLNGEPLDNFESLDNQEFDSEEETVEDSLVEDSEIGTCAEGTVSSSTDAKPCI.

A disordered region spans residues 1 to 79 (MNPSMKQKQE…PESSENKNLG (79 aa)). Residues 7-16 (QKQEEIKENI) show a composition bias toward basic and acidic residues. Position 27 is an N6-acetyllysine (K27). Residues S34, S36, S49, S63, and S64 each carry the phosphoserine modification. Positions 82 to 161 (TQESFDLMIK…AELIERLNGE (80 aa)) are necessary and sufficient for interaction with IDAS and CDT1. The stretch at 94–144 (PSSQYWKEVAEKRRKALYEALKENEKLHKEIEQKDNEIARLKKENKELAEV) forms a coiled coil. Residues 164–209 (DNFESLDNQEFDSEEETVEDSLVEDSEIGTCAEGTVSSSTDAKPCI) form a disordered region. The segment at 170–190 (DNQEFDSEEETVEDSLVEDSE) is homeodomain binding. The segment covering 170-190 (DNQEFDSEEETVEDSLVEDSE) has biased composition (acidic residues). Phosphoserine; by CK2 is present on S184. Polar residues predominate over residues 198–209 (TVSSSTDAKPCI).

Belongs to the geminin family. As to quaternary structure, homotetramer. Interacts with CDT1; this inhibits binding of the MCM complex to origins of replication. The complex with CDT1 exists in two forms, a 'permissive' heterotrimer and an 'inhibitory' heterohexamer. Interacts (via coiled-coil domain) with IDAS (via coiled-coil domain); this targets GMNN to the nucleus. The heterodimer formed by GMNN and MCIDAS has much lower affinity for CDT1 than the GMNN homodimer. Interacts with a subset of Hox proteins, affinity increasing from anterior to posterior types, the strongest interaction being with HOXB1, HOXC9 and HOXD10. Interacts with LRWD1 from G1/S to mitosis. Phosphorylated during mitosis. Phosphorylation at Ser-184 by CK2 results in enhanced binding to Hox proteins and more potent inhibitory effect on Hox transcriptional activity.

The protein localises to the cytoplasm. It localises to the nucleus. In terms of biological role, inhibits DNA replication by preventing the incorporation of MCM complex into pre-replication complex (pre-RC). It is degraded during the mitotic phase of the cell cycle. Its destruction at the metaphase-anaphase transition permits replication in the succeeding cell cycle. Inhibits histone acetyltransferase activity of KAT7/HBO1 in a CDT1-dependent manner, inhibiting histone H4 acetylation and DNA replication licensing. Inhibits the transcriptional activity of a subset of Hox proteins, enrolling them in cell proliferative control. This is Geminin (GMNN) from Homo sapiens (Human).